Consider the following 115-residue polypeptide: MTRVKRGNVARKHRNKILNLAKGFRGAHSVLFRTANQQIIKSLRYAYRDRARKKRDFRKLWIARINAASRQNNISYSQLINQLKTSNILLNRKILAQIALLDGPVFSQIVMESNS.

Belongs to the bacterial ribosomal protein bL20 family.

Its subcellular location is the plastid. It is found in the chloroplast. Functionally, binds directly to 23S ribosomal RNA and is necessary for the in vitro assembly process of the 50S ribosomal subunit. It is not involved in the protein synthesizing functions of that subunit. This Mesostigma viride (Green alga) protein is Large ribosomal subunit protein bL20c (rpl20).